The sequence spans 107 residues: Phosphoribosyl-ATP pyrophosphatase (107 aa).

It belongs to the PRA-PH family.

It is found in the cytoplasm. It carries out the reaction 1-(5-phospho-beta-D-ribosyl)-ATP + H2O = 1-(5-phospho-beta-D-ribosyl)-5'-AMP + diphosphate + H(+). It functions in the pathway amino-acid biosynthesis; L-histidine biosynthesis; L-histidine from 5-phospho-alpha-D-ribose 1-diphosphate: step 2/9. The sequence is that of Phosphoribosyl-ATP pyrophosphatase from Bacillus thuringiensis (strain Al Hakam).